Reading from the N-terminus, the 247-residue chain is PF03932 family protein CutC (247 aa).

Belongs to the CutC family.

Its subcellular location is the cytoplasm. The sequence is that of PF03932 family protein CutC from Klebsiella pneumoniae subsp. pneumoniae (strain ATCC 700721 / MGH 78578).